Consider the following 61-residue polypeptide: MAKKSMIVKALRKPKYKTRQKNRCKLCGRPKGYMRDFGMCRICFRNHASAGLIPGVSKSSW.

Zn(2+) contacts are provided by cysteine 24, cysteine 27, cysteine 40, and cysteine 43.

The protein belongs to the universal ribosomal protein uS14 family. Zinc-binding uS14 subfamily. As to quaternary structure, part of the 30S ribosomal subunit. Contacts proteins S3 and S10. Zn(2+) is required as a cofactor.

Functionally, binds 16S rRNA, required for the assembly of 30S particles and may also be responsible for determining the conformation of the 16S rRNA at the A site. This is Small ribosomal subunit protein uS14 from Borrelia hermsii (strain HS1 / DAH).